The chain runs to 353 residues: Methylthioribose-1-phosphate isomerase (353 aa).

Substrate-binding positions include 51-53, Arg-94, and Gln-199; that span reads RGA. Asp-240 acts as the Proton donor in catalysis. Residue 250–251 coordinates substrate; that stretch reads NK.

This sequence belongs to the eIF-2B alpha/beta/delta subunits family. MtnA subfamily. In terms of assembly, homodimer.

It carries out the reaction 5-(methylsulfanyl)-alpha-D-ribose 1-phosphate = 5-(methylsulfanyl)-D-ribulose 1-phosphate. Its pathway is amino-acid biosynthesis; L-methionine biosynthesis via salvage pathway; L-methionine from S-methyl-5-thio-alpha-D-ribose 1-phosphate: step 1/6. Functionally, catalyzes the interconversion of methylthioribose-1-phosphate (MTR-1-P) into methylthioribulose-1-phosphate (MTRu-1-P). The sequence is that of Methylthioribose-1-phosphate isomerase from Bacillus velezensis (strain DSM 23117 / BGSC 10A6 / LMG 26770 / FZB42) (Bacillus amyloliquefaciens subsp. plantarum).